The chain runs to 305 residues: Tyrosine recombinase XerC (305 aa).

One can recognise a Core-binding (CB) domain in the interval 2-88 (TNKQRLVHLF…ALRSFYKFLL (87 aa)). The 187-residue stretch at 109–295 (RIPSFLYEEE…SKDSLRKTYM (187 aa)) folds into the Tyr recombinase domain. Residues arginine 149, lysine 173, histidine 247, arginine 250, and histidine 273 contribute to the active site. Tyrosine 282 functions as the O-(3'-phospho-DNA)-tyrosine intermediate in the catalytic mechanism.

This sequence belongs to the 'phage' integrase family. XerC subfamily. Forms a cyclic heterotetrameric complex composed of two molecules of XerC and two molecules of XerD.

It localises to the cytoplasm. Its function is as follows. Site-specific tyrosine recombinase, which acts by catalyzing the cutting and rejoining of the recombining DNA molecules. The XerC-XerD complex is essential to convert dimers of the bacterial chromosome into monomers to permit their segregation at cell division. It also contributes to the segregational stability of plasmids. The polypeptide is Tyrosine recombinase XerC (Bacillus pumilus (strain SAFR-032)).